Consider the following 221-residue polypeptide: Protein Pisl_1005 (221 aa).

One can recognise an AMMECR1 domain in the interval 8-201; sequence EEGAYLVKLA…EKTPGGEIYE (194 aa).

The protein is Protein Pisl_1005 of Pyrobaculum islandicum (strain DSM 4184 / JCM 9189 / GEO3).